We begin with the raw amino-acid sequence, 97 residues long: Large ribosomal subunit protein bL28 (97 aa).

Belongs to the bacterial ribosomal protein bL28 family.

The sequence is that of Large ribosomal subunit protein bL28 from Rhizorhabdus wittichii (strain DSM 6014 / CCUG 31198 / JCM 15750 / NBRC 105917 / EY 4224 / RW1) (Sphingomonas wittichii).